Here is a 118-residue protein sequence, read N- to C-terminus: Large ribosomal subunit protein uL22c (118 aa).

It belongs to the universal ribosomal protein uL22 family. As to quaternary structure, part of the 50S ribosomal subunit.

It is found in the plastid. Its subcellular location is the chloroplast. This protein binds specifically to 23S rRNA. Functionally, the globular domain of the protein is located near the polypeptide exit tunnel on the outside of the subunit, while an extended beta-hairpin is found that lines the wall of the exit tunnel in the center of the 70S ribosome. The protein is Large ribosomal subunit protein uL22c (rpl22) of Physcomitrium patens (Spreading-leaved earth moss).